Reading from the N-terminus, the 457-residue chain is Glycerol-3-phosphate acyltransferase 3 (457 aa).

The chain crosses the membrane as a helical span at residues 14-34 (WLTLVGSLILLPSAFGLSLGI). Phosphoserine occurs at positions 68 and 77. Transmembrane regions (helical) follow at residues 137-157 (ISPK…CFLL) and 161-181 (VTLA…VGQL). An HXXXXD motif motif is present at residues 229-234 (HTSPID). A disordered region spans residues 429–457 (GNGSPSLALDSSTVDNHGSPEPAFRSESL). The segment covering 431–444 (GSPSLALDSSTVDN) has biased composition (polar residues).

It belongs to the 1-acyl-sn-glycerol-3-phosphate acyltransferase family.

It is found in the endoplasmic reticulum membrane. The enzyme catalyses sn-glycerol 3-phosphate + an acyl-CoA = a 1-acyl-sn-glycero-3-phosphate + CoA. The catalysed reaction is a 1-acyl-sn-glycero-3-phosphate + an acyl-CoA = a 1,2-diacyl-sn-glycero-3-phosphate + CoA. It catalyses the reaction dodecanoyl-CoA + sn-glycerol 3-phosphate = 1-dodecanoyl-sn-glycerol 3-phosphate + CoA. It carries out the reaction sn-glycerol 3-phosphate + hexadecanoyl-CoA = 1-hexadecanoyl-sn-glycero-3-phosphate + CoA. The enzyme catalyses sn-glycerol 3-phosphate + (9Z)-octadecenoyl-CoA = 1-(9Z-octadecenoyl)-sn-glycero-3-phosphate + CoA. The catalysed reaction is (9Z,12Z)-octadecadienoyl-CoA + sn-glycerol 3-phosphate = 1-(9Z,12Z)-octadecadienoyl-sn-glycero-3-phosphate + CoA. It catalyses the reaction 1-tetradecanoyl-sn-glycerol 3-phosphate + (9Z)-octadecenoyl-CoA = 1-tetradecanoyl-2-(9Z)-octadecenoyl-sn-glycero-3-phosphate + CoA. It carries out the reaction 1-hexadecanoyl-sn-glycero-3-phosphate + (9Z)-octadecenoyl-CoA = 1-hexadecanoyl-2-(9Z-octadecenoyl)-sn-glycero-3-phosphate + CoA. The enzyme catalyses 1-(9Z-octadecenoyl)-sn-glycero-3-phosphate + (9Z)-octadecenoyl-CoA = 1,2-di-(9Z-octadecenoyl)-sn-glycero-3-phosphate + CoA. The catalysed reaction is 1-(6Z,9Z,12Z-octadecatrienoyl)-sn-glycero-3-phosphate + (9Z)-octadecenoyl-CoA = (6Z,9Z,12Z)-octadecatrienoyl-2-(9Z)-octadecenoyl-sn-glycero-3-phosphate + CoA. It catalyses the reaction 1-(9Z,12Z,15Z)-octadecatrienoyl-sn-glycero-3-phosphate + (9Z)-octadecenoyl-CoA = 1-(9Z,12Z,15Z)-octadecatrienoyl-2-(9Z)-octadecenoyl-sn-glycero-3-phosphate + CoA. It carries out the reaction 1-(9Z-octadecenoyl)-sn-glycero-3-phosphate + tetradecanoyl-CoA = 1-(9Z)-octadecenoyl-2-tetradecanoyl-sn-glycero-3-phosphate + CoA. The enzyme catalyses 1-(9Z-octadecenoyl)-sn-glycero-3-phosphate + hexadecanoyl-CoA = 1-(9Z)-octadecenoyl-2-hexadecanoyl-sn-glycero-3-phosphate + CoA. The catalysed reaction is 1-(9Z-octadecenoyl)-sn-glycero-3-phosphate + octadecanoyl-CoA = 1-(9Z-octadecenoyl)-2-octadecanoyl-sn-glycero-3-phosphate + CoA. It catalyses the reaction 1-(9Z-octadecenoyl)-sn-glycero-3-phosphate + (9Z,12Z)-octadecadienoyl-CoA = 1-(9Z)-octadecenoyl-2-(9Z,12Z)-octadecadienoyl-sn-glycero-3-phosphate + CoA. It carries out the reaction 1-(5Z,8Z,11Z,14Z-eicosatetraenoyl)-sn-glycero-3-phosphate + (9Z)-octadecenoyl-CoA = 1-(5Z,8Z,11Z,14Z)-eicosatetraenoyl-2-(9Z)-octadecenoyl-sn-glycero-3-phosphate + CoA. The protein operates within glycerolipid metabolism; triacylglycerol biosynthesis. It participates in phospholipid metabolism; CDP-diacylglycerol biosynthesis; CDP-diacylglycerol from sn-glycerol 3-phosphate: step 1/3. In terms of biological role, converts glycerol-3-phosphate to 1-acyl-sn-glycerol-3-phosphate (lysophosphatidic acid or LPA) by incorporating an acyl moiety at the sn-1 position of the glycerol backbone. Also converts LPA into 1,2-diacyl-sn-glycerol-3-phosphate (phosphatidic acid or PA) by incorporating an acyl moiety at the sn-2 position of the glycerol backbone. Protects cells against lipotoxicity. The chain is Glycerol-3-phosphate acyltransferase 3 from Rattus norvegicus (Rat).